The primary structure comprises 252 residues: tRNA pseudouridine synthase A (252 aa).

The active-site Nucleophile is the Asp52. Tyr111 contributes to the substrate binding site.

This sequence belongs to the tRNA pseudouridine synthase TruA family. Homodimer.

The catalysed reaction is uridine(38/39/40) in tRNA = pseudouridine(38/39/40) in tRNA. Its function is as follows. Formation of pseudouridine at positions 38, 39 and 40 in the anticodon stem and loop of transfer RNAs. In Parabacteroides distasonis (strain ATCC 8503 / DSM 20701 / CIP 104284 / JCM 5825 / NCTC 11152), this protein is tRNA pseudouridine synthase A.